The sequence spans 99 residues: MSKFVIWTSELDSRLSKKYGRVVPRNLAVERPSIEEIEEAAKSLGFKVLQVEREKLNPKLSGIDEDLRTYGRIIIESPYGKAKTLKIIAQKIRELRRRR.

This sequence belongs to the SRP19 family. In terms of assembly, part of the signal recognition particle protein translocation system, which is composed of SRP and FtsY. Archaeal SRP consists of a 7S RNA molecule of 300 nucleotides and two protein subunits: SRP54 and SRP19.

The protein localises to the cytoplasm. Its function is as follows. Involved in targeting and insertion of nascent membrane proteins into the cytoplasmic membrane. Binds directly to 7S RNA and mediates binding of the 54 kDa subunit of the SRP. The polypeptide is Signal recognition particle 19 kDa protein (Pyrococcus abyssi (strain GE5 / Orsay)).